We begin with the raw amino-acid sequence, 307 residues long: tRNA dimethylallyltransferase 2 (307 aa).

G9–T16 contacts ATP. T11–T16 is a binding site for substrate. Residues D34–Q37 are interaction with substrate tRNA.

Belongs to the IPP transferase family. In terms of assembly, monomer. Requires Mg(2+) as cofactor.

The enzyme catalyses adenosine(37) in tRNA + dimethylallyl diphosphate = N(6)-dimethylallyladenosine(37) in tRNA + diphosphate. Catalyzes the transfer of a dimethylallyl group onto the adenine at position 37 in tRNAs that read codons beginning with uridine, leading to the formation of N6-(dimethylallyl)adenosine (i(6)A). The sequence is that of tRNA dimethylallyltransferase 2 from Azobacteroides pseudotrichonymphae genomovar. CFP2.